The chain runs to 204 residues: Somatotropin (204 aa).

Positions 1 to 17 are cleaved as a signal peptide; sequence MDRVVLMLSVLSLGVSS. Q18 is modified (pyrrolidone carboxylic acid). H36 provides a ligand contact to Zn(2+). The cysteines at positions 69 and 177 are disulfide-linked. E186 is a binding site for Zn(2+). An intrachain disulfide couples C194 to C202.

Belongs to the somatotropin/prolactin family.

Its subcellular location is the secreted. In terms of biological role, growth hormone plays an important role in growth control and is involved in the regulation of several anabolic processes. Implicated as an osmoregulatory substance important for seawater adaptation. The polypeptide is Somatotropin (gh) (Acanthopagrus butcheri (Australian black bream)).